Consider the following 373-residue polypeptide: 3 beta-hydroxysteroid dehydrogenase/Delta 5--&gt;4-isomerase type 1 (373 aa).

NADP(+)-binding positions include 10–15, Y155, and K159; that span reads GAGGFV. Residue K159 is the Proton donor of the active site. A helical membrane pass occupies residues 288–308; the sequence is LPLLYWLAFLLETVSFLLRPV.

The protein belongs to the 3-beta-HSD family. Steroidogenic tissues (includes testes, ovaries and adrenal glands).

The protein resides in the endoplasmic reticulum membrane. It is found in the mitochondrion membrane. The enzyme catalyses a 3beta-hydroxy-Delta(5)-steroid + NAD(+) = a 3-oxo-Delta(5)-steroid + NADH + H(+). The catalysed reaction is pregnenolone + NAD(+) = pregn-5-ene-3,20-dione + NADH + H(+). It carries out the reaction 3beta-hydroxyandrost-5-en-17-one + NAD(+) = androst-5-ene-3,17-dione + NADH + H(+). It catalyses the reaction androst-5-en-3beta,17beta-diol + NAD(+) = 17beta-hydroxy-androst-5-en-3-one + NADH + H(+). The enzyme catalyses a 3beta-hydroxysteroid + NADP(+) = a 3-oxosteroid + NADPH + H(+). The catalysed reaction is 5alpha-androstane-3beta,17beta-diol + NADP(+) = 17beta-hydroxy-5alpha-androstan-3-one + NADPH + H(+). It carries out the reaction 3beta-hydroxy-5alpha-androstan-17-one + NADP(+) = 5alpha-androstan-3,17-dione + NADPH + H(+). It catalyses the reaction a 3-oxo-Delta(5)-steroid = a 3-oxo-Delta(4)-steroid. The enzyme catalyses pregn-5-ene-3,20-dione = progesterone. The catalysed reaction is androst-5-ene-3,17-dione = androst-4-ene-3,17-dione. It carries out the reaction 17beta-hydroxy-androst-5-en-3-one = testosterone. It catalyses the reaction 5alpha-androstane-3beta,17beta-diol + NAD(+) = 17beta-hydroxy-5alpha-androstan-3-one + NADH + H(+). The protein operates within steroid hormone biosynthesis. It participates in steroid metabolism. Its function is as follows. A bifunctional enzyme responsible for the oxidation and isomerization of 3beta-hydroxy-Delta(5)-steroid precursors to 3-oxo-Delta(4)-steroids, an essential step in steroid hormone biosynthesis. Specifically catalyzes the conversion of pregnenolone to progesterone, 17alpha-hydroxypregnenolone to 17alpha-hydroxyprogesterone, dehydroepiandrosterone (DHEA) to 4-androstenedione, and androstenediol to testosterone. Additionally, catalyzes the interconversion between 3beta-hydroxy and 3-oxo-5alpha-androstane steroids controlling the bioavalability of the active forms. Specifically converts dihydrotestosterone to its inactive form 5alpha-androstanediol, that does not bind androgen receptor/AR. Also converts androstanedione, a precursor of testosterone and estrone, to epiandrosterone. Expected to use NAD(+) as preferred electron donor for the 3-beta-hydroxy-steroid dehydrogenase activity and NADPH for the 3-ketosteroid reductase activity. The polypeptide is 3 beta-hydroxysteroid dehydrogenase/Delta 5--&gt;4-isomerase type 1 (Mus musculus (Mouse)).